Reading from the N-terminus, the 898-residue chain is Transportin-1 (898 aa).

An N-acetylmethionine modification is found at Met-1. HEAT repeat units lie at residues 19–46 (GLQQ…QKLE), 51–89 (YPDF…AHFQ), 98–131 (FIKS…KGEL), 137–174 (LLPK…LDSD), 181–211 (NIMI…QFII), 224–251 (FIEN…VMLL), 263–290 (HNIV…FWLT), 306–397 (PKLI…LANV), 405–433 (HILP…GAIA), 445–472 (PELI…TLSR), 486–519 (LKPL…EEEA), 527–560 (LAYI…ADSV), 568–606 (EYIQ…TALQ), 614–665 (EPVY…GLGG), 676–707 (ILTL…KACF), 715–748 (ADFM…IQMG), 756–791 (PMVL…YVCP), 799–832 (QQFI…ISVN), 841–872 (IFFC…KNQV), and 875–895 (ENWR…LAAF). The region spanning 41–109 (VQQKLEQLNQ…KSECLNNIGD (69 aa)) is the Importin N-terminal domain. Positions 347-374 (FHRSRTVAQQHDEDGIEEEDDDDDEIDD) are disordered. Acidic residues predominate over residues 360-374 (DGIEEEDDDDDEIDD).

The protein belongs to the importin beta family. Importin beta-2 subfamily. As to quaternary structure, identified in a complex that contains TNPO1, RAN and RANBP1. Binds HNRPA1, HNRPA2, HNRNPDL, RPS7, RPL5 and RAN. Interacts with H2A, H2B, H3 and H4 histones. Interacts with isoform 1 and isoform 5 of ADAR/ADAR1 (via DRBM 3 domain). Interacts with SNAI1 (via zinc fingers); the interaction mediates SNAI1 nuclear import. Interacts with SNAI2 (via zinc fingers). Interacts with RPL23A (via BIB domain) and SRP19; this interaction is involved in RPL23A and SRP19 import into the nucleus. Interacts (via HEAT repeats 8-12) with BAP1 (via non-classical PY-NLS); this interaction is direct, is involved in BAP1 nuclear import and disrupts BAP1 homodimerization. In terms of assembly, (Microbial infection) Binds to HIV-1 Rev.

Its subcellular location is the cytoplasm. The protein resides in the nucleus. In terms of biological role, functions in nuclear protein import as nuclear transport receptor. Serves as receptor for nuclear localization signals (NLS) in cargo substrates. May mediate docking of the importin/substrate complex to the nuclear pore complex (NPC) through binding to nucleoporin and the complex is subsequently translocated through the pore by an energy requiring, Ran-dependent mechanism. At the nucleoplasmic side of the NPC, Ran binds to the importin, the importin/substrate complex dissociates and importin is re-exported from the nucleus to the cytoplasm where GTP hydrolysis releases Ran. The directionality of nuclear import is thought to be conferred by an asymmetric distribution of the GTP- and GDP-bound forms of Ran between the cytoplasm and nucleus. Involved in nuclear import of M9-containing proteins. In vitro, binds directly to the M9 region of the heterogeneous nuclear ribonucleoproteins (hnRNP), A1 and A2 and mediates their nuclear import. Involved in hnRNP A1/A2 nuclear export. Mediates the nuclear import of ribosomal proteins RPL23A, RPS7 and RPL5. In vitro, mediates nuclear import of H2A, H2B, H3 and H4 histones. In vitro, mediates nuclear import of SRP19. Mediates nuclear import of ADAR/ADAR1 isoform 1 and isoform 5 in a RanGTP-dependent manner. Main mediator of PR-DUB complex component BAP1 nuclear import; acts redundantly with the karyopherins KPNA1 and KPNA2. Functionally, (Microbial infection) In case of HIV-1 infection, binds and mediates the nuclear import of HIV-1 Rev. The protein is Transportin-1 (TNPO1) of Homo sapiens (Human).